Reading from the N-terminus, the 904-residue chain is E3 SUMO-protein ligase SIZ1 (904 aa).

Positions 1 to 13 (MINLEDYWEDETP) are enriched in acidic residues. Residues 1 to 21 (MINLEDYWEDETPGPDREPTN) are disordered. Residues 34-68 (MELLKVSELKDICRSVSFPVSGRKAVLQDLIRNFL) enclose the SAP domain. The segment at 122-170 (MEGPPTVQQQSPSVIRQSPTQRRKTSTTSSTSRAPPPTNPDASSSSSSF) is disordered. Residues 127–136 (TVQQQSPSVI) are compositionally biased toward polar residues. S132 carries the phosphoserine modification. Residues 137-154 (RQSPTQRRKTSTTSSTSR) are compositionally biased toward low complexity. The PINIT domain maps to 162–314 (DASSSSSSFA…KLFGYIVEMI (153 aa)). The SP-RING-type zinc finger occupies 344 to 431 (EDEEMGLTTT…LQNCQKNVEQ (88 aa)). Residues C377, H379, C400, and C403 each coordinate Zn(2+). Disordered regions lie at residues 443-584 (ILED…DDDR), 596-616 (STNT…TLDP), and 672-733 (SPDV…ISDS). Positions 444–454 (LEDDDDSDSDS) are enriched in acidic residues. The span at 501 to 511 (NNHDDSNRHSN) shows a compositional bias: basic and acidic residues. The span at 512–553 (DNNNNSIKNNDSHNKNNNNNNNNNNNNNDNNNSIENNDSNSN) shows a compositional bias: low complexity. 3 stretches are compositionally biased toward polar residues: residues 561-574 (RSNT…KNLM), 596-611 (STNT…SAPS), and 672-683 (SPDVSVSSPTPR). Low complexity predominate over residues 684–699 (NTASNASSSALSTPPL). Polar residues predominate over residues 721–733 (INSNSYTASISDS). S794 is subject to Phosphoserine. The interval 794–904 (SLPTTEAITR…QDYGKKYNSG (111 aa)) is required for localization at the bud neck. A compositionally biased stretch (polar residues) spans 877 to 894 (RQLSNTSSTSPIMGTWKT). The interval 877–904 (RQLSNTSSTSPIMGTWKTQDYGKKYNSG) is disordered.

It belongs to the PIAS family. In terms of assembly, interacts with UBC9 and CDC3. In terms of processing, phosphorylated in early M-phase. Autosumoylated upon ethanol stress.

The protein resides in the cytoplasm. The protein localises to the nucleus. It is found in the bud neck. The protein operates within protein modification; protein sumoylation. Acts as an E3 ligase mediating SUMO/Smt3 attachment to septins and PCNA. May be involved in chromosome maintenance. This chain is E3 SUMO-protein ligase SIZ1 (SIZ1), found in Saccharomyces cerevisiae (strain ATCC 204508 / S288c) (Baker's yeast).